The following is a 301-amino-acid chain: Probable alpha-L-glutamate ligase (301 aa).

Residues 104-287 (MQLLSRKGIG…VAGLIVDFIE (184 aa)) enclose the ATP-grasp domain. Residues Lys141, 178–179 (EF), Asp187, and 211–213 (RSN) contribute to the ATP site. Residues Asp248, Glu260, and Asn262 each coordinate Mg(2+). Residues Asp248, Glu260, and Asn262 each coordinate Mn(2+).

The protein belongs to the RimK family. Mg(2+) is required as a cofactor. Mn(2+) serves as cofactor.

The chain is Probable alpha-L-glutamate ligase from Aliivibrio salmonicida (strain LFI1238) (Vibrio salmonicida (strain LFI1238)).